A 119-amino-acid polypeptide reads, in one-letter code: Hydrogenase maturation factor HypA (119 aa).

His-2 is a Ni(2+) binding site. Cys-73, Cys-76, Cys-89, and Cys-92 together coordinate Zn(2+).

The protein belongs to the HypA/HybF family.

Involved in the maturation of [NiFe] hydrogenases. Required for nickel insertion into the metal center of the hydrogenase. The sequence is that of Hydrogenase maturation factor HypA from Dehalococcoides mccartyi (strain ATCC BAA-2100 / JCM 16839 / KCTC 5957 / BAV1).